The chain runs to 528 residues: ATP synthase F(1) complex catalytic subunit beta, mitochondrial (528 aa).

The transit peptide at 1–46 (MLGLVGRVVAASASGALRGLSPSAPLPQAQLLLRAAPAALQPARDY) directs the protein to the mitochondrion. O-linked (GlcNAc) serine glycosylation is present at serine 106. Lysine 124 and lysine 161 each carry N6-acetyllysine; alternate. N6-succinyllysine; alternate is present on residues lysine 124 and lysine 161. An N6-acetyllysine modification is found at lysine 198. Positions 209, 210, 211, 212, 213, and 214 each coordinate ADP. Glycine 209 contacts ATP. Phosphate-binding residues include glycine 209, valine 210, glycine 211, lysine 212, and threonine 213. Glycine 211, lysine 212, threonine 213, and valine 214 together coordinate ATP. Residue threonine 213 participates in Mg(2+) binding. Glutamate 238 contacts Mg(2+). Arginine 239 lines the ATP pocket. An N6-acetyllysine; alternate mark is found at lysine 259 and lysine 264. N6-succinyllysine; alternate occurs at positions 259 and 264. Threonine 312 carries the phosphothreonine modification. A Phosphoserine modification is found at serine 415. Residue lysine 426 is modified to N6-acetyllysine. Residue serine 433 is modified to Phosphoserine. An N6-acetyllysine mark is found at lysine 480 and lysine 485. Lysine 522 carries the post-translational modification N6-acetyllysine; alternate. Lysine 522 carries the N6-succinyllysine; alternate modification.

It belongs to the ATPase alpha/beta chains family. Homotrimer. Component of the ATP synthase complex composed at least of ATP5F1A/subunit alpha, ATP5F1B/subunit beta, ATP5MC1/subunit c (homooctomer), MT-ATP6/subunit a, MT-ATP8/subunit 8, ATP5ME/subunit e, ATP5MF/subunit f, ATP5MG/subunit g, ATP5MK/subunit k, ATP5MJ/subunit j, ATP5F1C/subunit gamma, ATP5F1D/subunit delta, ATP5F1E/subunit epsilon, ATP5PF/subunit F6, ATP5PB/subunit b, ATP5PD/subunit d, ATP5PO/subunit OSCP. ATP synthase complex consists of a soluble F(1) head domain (subunits alpha(3) and beta(3)) - the catalytic core - and a membrane F(0) domain - the membrane proton channel (subunits c, a, 8, e, f, g, k and j). These two domains are linked by a central stalk (subunits gamma, delta, and epsilon) rotating inside the F1 region and a stationary peripheral stalk (subunits F6, b, d, and OSCP). Interacts with PPIF. Interacts with BCL2L1 isoform BCL-X(L); the interaction mediates the association of BCL2L1 isoform BCL-X(L) with the mitochondrial membrane F(1)F(0) ATP synthase and enhances neurons metabolic efficiency. Interacts with CLN5 and PPT1. Interacts with S100A1; this interaction increases F1-ATPase activity. Interacts with MTLN. Interacts with TTC5/STRAP; the interaction results in decreased mitochondrial ATP production.

The protein resides in the mitochondrion inner membrane. The catalysed reaction is ATP + H2O + 4 H(+)(in) = ADP + phosphate + 5 H(+)(out). Catalytic subunit beta, of the mitochondrial membrane ATP synthase complex (F(1)F(0) ATP synthase or Complex V) that produces ATP from ADP in the presence of a proton gradient across the membrane which is generated by electron transport complexes of the respiratory chain. ATP synthase complex consist of a soluble F(1) head domain - the catalytic core - and a membrane F(1) domain - the membrane proton channel. These two domains are linked by a central stalk rotating inside the F(1) region and a stationary peripheral stalk. During catalysis, ATP synthesis in the catalytic domain of F(1) is coupled via a rotary mechanism of the central stalk subunits to proton translocation. In vivo, can only synthesize ATP although its ATP hydrolase activity can be activated artificially in vitro. With the subunit alpha (ATP5F1A), forms the catalytic core in the F(1) domain. This chain is ATP synthase F(1) complex catalytic subunit beta, mitochondrial, found in Bos taurus (Bovine).